We begin with the raw amino-acid sequence, 307 residues long: E3 ubiquitin-protein ligase PHF7 (307 aa).

The segment at 30-68 adopts a C2HC pre-PHD-type zinc-finger fold; that stretch reads SPVCLLCLQEPGDPEKLGEFLQKDNLCVHYFCLILSSRL. Cys33, Cys36, His58, and Cys61 together coordinate Zn(2+). The tract at residues 67-92 is required for interaction and ubiquitination of the nucleosome core particle; it reads RLPQKGQPNRGLHGFMPEDIKREAVR. Residues 96–145 form a PHD-type zinc finger; it reads KICFVCKKKGAAIRCQNDQCVQNFHLPCGQERGCLSQFFGEYKSYCRKHR. Positions 98, 101, 110, 115, 120, 123, 141, 144, 160, 163, 179, 180, 186, 189, 204, 207, 248, 253, 273, 276, 282, 285, 297, and 300 each coordinate Zn(2+). Residues 150–307 are required for interaction with ubiquitinated UBE2D2; the sequence is IHQGSLGEES…NECLPASTTS (158 aa). Residues 160 to 208 form an RING-type; degenerate zinc finger; the sequence is CVLCCENLSRTSVENIQSPCCSQAIYHRKCIQKYAHTSAKHFFKCPQCN. Residues 244–301 form a required for association with and ubiquitination of H3 region; sequence RYRHCDAPICLYEQGRDSFEDEGRWRLILCATCGSHGTHRDCSSLRPNSKKWECNECL.

Interacts with MEF2C; the interaction promotes MEF2C binding to its transcription targets. Interacts with GATA4; the interaction promotes GATA4 binding to its transcription targets. Interacts with UBE2D2; the interaction inhibits cleavage of PHF7 and promotes association of the complex with the nucleosome core particle. As to expression, expressed in Leydig cells and in developing spermatids (at protein level). Highly expressed in Sertoli cells in testis.

The protein resides in the nucleus. It carries out the reaction S-ubiquitinyl-[E2 ubiquitin-conjugating enzyme]-L-cysteine + [acceptor protein]-L-lysine = [E2 ubiquitin-conjugating enzyme]-L-cysteine + N(6)-ubiquitinyl-[acceptor protein]-L-lysine.. The protein operates within protein modification; protein ubiquitination. Its function is as follows. E3 ubiquitin-protein ligase which ubiquitinates histone H3 at 'Lys-14'. Required for male fertility, via inhibition of SPOP-mediated BRDT degradation when in the presence of acetylated histone H4 in early condensing spermatids. Stabilization of BRDT allows it to facilitate histone removal in early condensing spermatids and promote the progression of histone-to-protamine exchange. Promotes the expression of steroidogenesis proteins in the testes, and as a result plays a role in maintaining testosterone levels and repressing osteoclastogenesis. Promotes transcription of cardiac enhancer genes by facilitating binding of cardiac transcription factors such as MEF2C and GATA4 to target gene promoters. Ubiquitinates histone H4. Ubiquitinates histone H2A and H3 as part of the nucleosome core particle. In Mus musculus (Mouse), this protein is E3 ubiquitin-protein ligase PHF7.